Consider the following 215-residue polypeptide: MKYQLTALEARVIGCLLEKQVTTPEQYPLSVNGVVTACNQKTNREPVMNLSESEVQEQLDNLVKRHYLRTVSGFGNRVTKYEQRFCNSEFGDLKLSAAEVALITTLLLRGAQTPGELRSRAARMYEFSDMAEVESTLEQLANREDGPFVVRLAREPGKRESRYMHLFSGEVEDQPAVTDMSNAVDGDLQARVEALEIEVAELKQRLDSLLAHLGD.

An N6-acetyllysine modification is found at Lys80.

It belongs to the UPF0502 family.

This is UPF0502 protein YceH from Shigella sonnei (strain Ss046).